The sequence spans 172 residues: NAD(P)H-quinone oxidoreductase subunit I, chloroplastic (172 aa).

2 consecutive 4Fe-4S ferredoxin-type domains span residues glycine 55–lysine 84 and leucine 95–glutamate 124. Residues cysteine 64, cysteine 67, cysteine 70, cysteine 74, cysteine 104, cysteine 107, cysteine 110, and cysteine 114 each coordinate [4Fe-4S] cluster.

The protein belongs to the complex I 23 kDa subunit family. NDH is composed of at least 16 different subunits, 5 of which are encoded in the nucleus. [4Fe-4S] cluster serves as cofactor.

The protein resides in the plastid. It is found in the chloroplast thylakoid membrane. The catalysed reaction is a plastoquinone + NADH + (n+1) H(+)(in) = a plastoquinol + NAD(+) + n H(+)(out). It carries out the reaction a plastoquinone + NADPH + (n+1) H(+)(in) = a plastoquinol + NADP(+) + n H(+)(out). NDH shuttles electrons from NAD(P)H:plastoquinone, via FMN and iron-sulfur (Fe-S) centers, to quinones in the photosynthetic chain and possibly in a chloroplast respiratory chain. The immediate electron acceptor for the enzyme in this species is believed to be plastoquinone. Couples the redox reaction to proton translocation, and thus conserves the redox energy in a proton gradient. In Arabidopsis thaliana (Mouse-ear cress), this protein is NAD(P)H-quinone oxidoreductase subunit I, chloroplastic.